Consider the following 246-residue polypeptide: U2 small nuclear ribonucleoprotein A' (246 aa).

LRR repeat units lie at residues 19-40 (RDRE…GVTR), 42-63 (QNDA…PLLQ), 64-85 (QLKT…IGHS), and 88-109 (ALHS…VHLS). In terms of domain architecture, LRRCT spans 122–160 (TPASREAQYREFVIWKLPQVRVLDYQRIKDKERARAKDL).

It belongs to the U2 small nuclear ribonucleoprotein A family. In terms of assembly, associated with the spliceosome.

Its subcellular location is the nucleus. Its function is as follows. Involved in pre-mRNA splicing. This is U2 small nuclear ribonucleoprotein A' (LEA1) from Mycosarcoma maydis (Corn smut fungus).